A 252-amino-acid chain; its full sequence is Low-density lipoprotein receptor-related protein 5-like protein (252 aa).

5 LDL-receptor class B repeats span residues 3-45 (GHVY…NWVA), 46-88 (RSLY…HPEM), 89-132 (GLTY…DLQE), 133-175 (GKLY…LGDF), and 176-218 (IYWT…DKVV). The segment at 223 to 247 (HADRNGGAATCASSRPTQPGLAAPS) is disordered.

The protein is Low-density lipoprotein receptor-related protein 5-like protein (LRP5L) of Homo sapiens (Human).